The following is a 570-amino-acid chain: Repressible high-affinity phosphate permease (570 aa).

At 1 to 61 (MSTPQKTAGG…AVAGVGFFTD (61 aa)) the chain is on the cytoplasmic side. A helical transmembrane segment spans residues 62–82 (SYDIFTVSLLTLMLGIVYFPG). Residues 83-95 (EGKMPTTSDTAIK) are Extracellular-facing. The chain crosses the membrane as a helical span at residues 96–116 (LATSAGTVIGQVGFGAAADVF). Residues 117 to 120 (GRKS) lie on the Cytoplasmic side of the membrane. The chain crosses the membrane as a helical span at residues 121-141 (MYGLELLFIIFATLAQALASG). At 142-143 (SP) the chain is on the extracellular side. A helical transmembrane segment spans residues 144 to 164 (SINIIGIIIFWRVLMGVGIGG). The Cytoplasmic portion of the chain corresponds to 165-186 (DYPLSSIITSEFATTKWRGAMM). Residues 187 to 207 (GAVFAMQGLGQLAAAFVMLFV) traverse the membrane as a helical segment. Over 208-237 (TLGFKKSLEAAPTLASCTGDCAVAVDKMWR) the chain is Extracellular. The helical transmembrane segment at 238–258 (TVIGVGAVPGCIALYYRLTIP) threads the bilayer. Topologically, residues 259-325 (ETPRYTFDVK…FFRHYSKRKN (67 aa)) are cytoplasmic. The chain crosses the membrane as a helical span at residues 326 to 346 (AMLLAGTALSWCFLDIAYYGV). Residues 347-374 (SLNNATILNVIGYSTTGAKNTYEILYNT) are Extracellular-facing. Residues 375-395 (AVGNLIIVLAGAVPGYWVTVF) form a helical membrane-spanning segment. Residues 396 to 403 (TVDTVGRK) are Cytoplasmic-facing. The chain crosses the membrane as a helical span at residues 404–424 (PIQFMGFGILTILFVVMGFAY). The Extracellular portion of the chain corresponds to 425–433 (KHLSPHALL). Residues 434–454 (AIFVLAQFFFNFGPNATTFIV) form a helical membrane-spanning segment. The Cytoplasmic segment spans residues 455–468 (PGEVFPTRYRSTSH). Residues 469-489 (GLSAAMGKIGSIIGQGAIAPL) traverse the membrane as a helical segment. Topologically, residues 490 to 505 (RTRGAVKGGNPNPWMN) are extracellular. The helical transmembrane segment at 506–526 (HVLEIYALFMLLGVGTTFLIP) threads the bilayer. Residues 527–570 (ETKRKTLEELSGEFDMSGEEEAQRDTTLTEHKTEAPTSSAAVNA) are Cytoplasmic-facing. A compositionally biased stretch (acidic residues) spans 537–546 (SGEFDMSGEE). Positions 537–570 (SGEFDMSGEEEAQRDTTLTEHKTEAPTSSAAVNA) are disordered. A compositionally biased stretch (basic and acidic residues) spans 547–560 (EAQRDTTLTEHKTE). Over residues 561–570 (APTSSAAVNA) the composition is skewed to polar residues.

This sequence belongs to the major facilitator superfamily. Sugar transporter (TC 2.A.1.1) family.

It is found in the cell membrane. Phosphate transport activity is competitively inhibited by arsenate. Its function is as follows. High-affinity transporter for external inorganic phosphate. Acts probably as a H(+)-phosphate symporter. This chain is Repressible high-affinity phosphate permease, found in Neurospora crassa (strain ATCC 24698 / 74-OR23-1A / CBS 708.71 / DSM 1257 / FGSC 987).